We begin with the raw amino-acid sequence, 396 residues long: CCA-adding enzyme (396 aa).

ATP-binding residues include Gly-32 and Arg-35. Residues Gly-32 and Arg-35 each contribute to the CTP site. Residues Asp-45 and Asp-47 each coordinate Mg(2+). 5 residues coordinate ATP: Arg-116, Asp-159, Arg-162, Arg-165, and Arg-168. CTP contacts are provided by Arg-116, Asp-159, Arg-162, Arg-165, and Arg-168.

The protein belongs to the tRNA nucleotidyltransferase/poly(A) polymerase family. Bacterial CCA-adding enzyme type 3 subfamily. As to quaternary structure, homodimer. Requires Mg(2+) as cofactor.

The catalysed reaction is a tRNA precursor + 2 CTP + ATP = a tRNA with a 3' CCA end + 3 diphosphate. It catalyses the reaction a tRNA with a 3' CCA end + 2 CTP + ATP = a tRNA with a 3' CCACCA end + 3 diphosphate. Catalyzes the addition and repair of the essential 3'-terminal CCA sequence in tRNAs without using a nucleic acid template. Adds these three nucleotides in the order of C, C, and A to the tRNA nucleotide-73, using CTP and ATP as substrates and producing inorganic pyrophosphate. tRNA 3'-terminal CCA addition is required both for tRNA processing and repair. Also involved in tRNA surveillance by mediating tandem CCA addition to generate a CCACCA at the 3' terminus of unstable tRNAs. While stable tRNAs receive only 3'-terminal CCA, unstable tRNAs are marked with CCACCA and rapidly degraded. This Lactobacillus delbrueckii subsp. bulgaricus (strain ATCC BAA-365 / Lb-18) protein is CCA-adding enzyme.